A 400-amino-acid polypeptide reads, in one-letter code: Enoyl-[acyl-carrier-protein] reductase [NADH] (400 aa).

Residues 48-53 (GASTGY), 74-75 (FE), 111-112 (DA), and 139-140 (LA) each bind NAD(+). Residue tyrosine 225 participates in substrate binding. The active-site Proton donor is the tyrosine 235. NAD(+) is bound by residues lysine 244 and 273 to 275 (VVT).

It belongs to the TER reductase family. Monomer.

It carries out the reaction a 2,3-saturated acyl-[ACP] + NAD(+) = a (2E)-enoyl-[ACP] + NADH + H(+). Its pathway is lipid metabolism; fatty acid biosynthesis. Its function is as follows. Involved in the final reduction of the elongation cycle of fatty acid synthesis (FAS II). Catalyzes the reduction of a carbon-carbon double bond in an enoyl moiety that is covalently linked to an acyl carrier protein (ACP). This is Enoyl-[acyl-carrier-protein] reductase [NADH] from Burkholderia ambifaria (strain ATCC BAA-244 / DSM 16087 / CCUG 44356 / LMG 19182 / AMMD) (Burkholderia cepacia (strain AMMD)).